The primary structure comprises 321 residues: Annexin A5 (321 aa).

A2 is subject to N-acetylalanine. Annexin repeat units lie at residues F15–K86, P87–Q158, A170–K242, and S246–G317. K29 is covalently cross-linked (Glycyl lysine isopeptide (Lys-Gly) (interchain with G-Cter in SUMO1); alternate). Residue K29 forms a Glycyl lysine isopeptide (Lys-Gly) (interchain with G-Cter in SUMO2); alternate linkage. N6-acetyllysine is present on residues K70, K76, K79, K97, and K101. K290 carries the N6-succinyllysine modification. Positions L314–D320 match the [IL]-x-C-x-x-[DE] motif motif.

This sequence belongs to the annexin family. In terms of assembly, monomer. Binds ATRX and EIF5B. S-nitrosylation is induced by interferon-gamma and oxidatively-modified low-densitity lipoprotein (LDL(ox)) possibly implicating the iNOS-S100A8/9 transnitrosylase complex.

Its function is as follows. This protein is an anticoagulant protein that acts as an indirect inhibitor of the thromboplastin-specific complex, which is involved in the blood coagulation cascade. The polypeptide is Annexin A5 (ANXA5) (Bos taurus (Bovine)).